Here is a 259-residue protein sequence, read N- to C-terminus: HTH-type transcriptional regulator TtgV (259 aa).

An HTH iclR-type domain is found at 14 to 76 (IQVIARAASI…GPAGGFRLGP (63 aa)). The H-T-H motif DNA-binding region spans 36 to 59 (LAAIAQLVGLPRSTVQRIINALEE). An IclR-ED domain is found at 89–253 (ILSLVKPYLR…KLNIERAIGR (165 aa)).

Represses the expression of the ttgGHI and ttgVW operons. Binds to the ttgGHI / ttgVW intergenic region, probably preventing binding of RNA polymerase; ttgV dissociates from this region in the presence of 1-hexanol. The sequence is that of HTH-type transcriptional regulator TtgV (ttgV) from Pseudomonas putida (strain DOT-T1E).